The chain runs to 200 residues: MAKFTQHTGLVVPLDAANVDTDAIIPKQFLQKVTRTGFGQHLFHDWRFLDDAGQQPNPEFVLNKPHYKGASILLARENFGCGSSREHAPWALTDYGFKVVIAPSFADIFYGNSFNNQLLPVKLSDEEVDELFKLVDGQEGINFIVDLENQVVQAGSKSYPFEIDSFRRHCMINGLDSIGLTLQHEASITEYEKNQPAFLN.

The protein belongs to the LeuD family. LeuD type 1 subfamily. In terms of assembly, heterodimer of LeuC and LeuD.

The catalysed reaction is (2R,3S)-3-isopropylmalate = (2S)-2-isopropylmalate. The protein operates within amino-acid biosynthesis; L-leucine biosynthesis; L-leucine from 3-methyl-2-oxobutanoate: step 2/4. In terms of biological role, catalyzes the isomerization between 2-isopropylmalate and 3-isopropylmalate, via the formation of 2-isopropylmaleate. The protein is 3-isopropylmalate dehydratase small subunit of Pectobacterium carotovorum subsp. carotovorum (strain PC1).